Reading from the N-terminus, the 147-residue chain is Protein LOL1 (147 aa).

The disordered stretch occupies residues 1 to 38 (MVASRAPRSESPWLKKPMHGVSGSTAMASTPWSSMPPS). The span at 22–38 (SGSTAMASTPWSSMPPS) shows a compositional bias: polar residues. The tract at residues 47 to 77 (QLVCSGCRNLLMYPAGATSICCAVCGTVTAV) is putative zinc finger.

The protein resides in the nucleus. In terms of biological role, putative zinc finger that may be involved in programmed cell death and defense response. The chain is Protein LOL1 (LOL1) from Oryza sativa subsp. japonica (Rice).